Consider the following 225-residue polypeptide: Peptidyl-tRNA hydrolase (225 aa).

Tyr-14 contacts tRNA. His-19 functions as the Proton acceptor in the catalytic mechanism. Phe-64, Asn-66, and Asn-112 together coordinate tRNA. The segment at 184 to 225 is disordered; the sequence is ALRMQPPKPEKPKPAAKAPEAQAPEAAPDERSALQKLADRFR. Positions 198–209 are enriched in low complexity; the sequence is AAKAPEAQAPEA. Over residues 211 to 225 the composition is skewed to basic and acidic residues; it reads PDERSALQKLADRFR.

Belongs to the PTH family. In terms of assembly, monomer.

It localises to the cytoplasm. The catalysed reaction is an N-acyl-L-alpha-aminoacyl-tRNA + H2O = an N-acyl-L-amino acid + a tRNA + H(+). Hydrolyzes ribosome-free peptidyl-tRNAs (with 1 or more amino acids incorporated), which drop off the ribosome during protein synthesis, or as a result of ribosome stalling. Its function is as follows. Catalyzes the release of premature peptidyl moieties from peptidyl-tRNA molecules trapped in stalled 50S ribosomal subunits, and thus maintains levels of free tRNAs and 50S ribosomes. This Cereibacter sphaeroides (strain ATCC 17023 / DSM 158 / JCM 6121 / CCUG 31486 / LMG 2827 / NBRC 12203 / NCIMB 8253 / ATH 2.4.1.) (Rhodobacter sphaeroides) protein is Peptidyl-tRNA hydrolase.